Here is a 114-residue protein sequence, read N- to C-terminus: Gas vesicle protein J (114 aa).

The interval 63-114 is disordered; sequence PTGTDMERVEEAAGISPDESRSLDTRSESEQMDELPGEAGASVSNTAPQEEE. Residues 80 to 91 show a composition bias toward basic and acidic residues; sequence DESRSLDTRSES. A compositionally biased stretch (polar residues) spans 104-114; that stretch reads SVSNTAPQEEE.

It belongs to the gas vesicle GvpA family. As to quaternary structure, gvpF to GvpM interact with each other in vitro, and may form multi-subunit complex(es). Interacts with GvpA.

The protein resides in the gas vesicle. Functionally, a minor component of the gas vesicle, proteins GvpF to GvpM might be involved in nucleating gas vesicle formation. Gas vesicles are hollow, gas filled proteinaceous nanostructures found in some microorganisms. They allow positioning of halobacteria at the optimal depth for growth in the poorly aerated, shallow brine pools of their habitat. In terms of biological role, expression of a 9.5 kb mc-vac DNA fragment containing 2 divergently transcribed regions (gvpD-gvpE-gvpF-gvpG-gvpH-gvpI-gvpJ-gvpK-gvpL-gvpM and gvpA-gvpC-gvpN-gvpO) allows H.volcanii to produce gas vesicles. This Haloferax mediterranei (strain ATCC 33500 / DSM 1411 / JCM 8866 / NBRC 14739 / NCIMB 2177 / R-4) (Halobacterium mediterranei) protein is Gas vesicle protein J.